The sequence spans 577 residues: Glycine--tRNA ligase (577 aa).

Substrate-binding residues include R98 and E164. Residues 196 to 198 (RNE), 206 to 211 (IRLREF), 328 to 329 (EC), and 451 to 454 (GIDR) each bind ATP. Substrate is bound at residue 211–215 (FTQAE). Residue 447–451 (EPSYG) participates in substrate binding.

It belongs to the class-II aminoacyl-tRNA synthetase family.

It localises to the cytoplasm. It catalyses the reaction tRNA(Gly) + glycine + ATP = glycyl-tRNA(Gly) + AMP + diphosphate. In terms of biological role, catalyzes the attachment of glycine to tRNA(Gly). The polypeptide is Glycine--tRNA ligase (Methanocaldococcus jannaschii (strain ATCC 43067 / DSM 2661 / JAL-1 / JCM 10045 / NBRC 100440) (Methanococcus jannaschii)).